The primary structure comprises 121 residues: Small ribosomal subunit protein uS13 (121 aa).

The disordered stretch occupies residues 93-121; the sequence is RGLPVRGQNSKNNARTRKGPRRTVANKKK. Over residues 106–121 the composition is skewed to basic residues; that stretch reads ARTRKGPRRTVANKKK.

This sequence belongs to the universal ribosomal protein uS13 family. In terms of assembly, part of the 30S ribosomal subunit. Forms a loose heterodimer with protein S19. Forms two bridges to the 50S subunit in the 70S ribosome.

In terms of biological role, located at the top of the head of the 30S subunit, it contacts several helices of the 16S rRNA. In the 70S ribosome it contacts the 23S rRNA (bridge B1a) and protein L5 of the 50S subunit (bridge B1b), connecting the 2 subunits; these bridges are implicated in subunit movement. Contacts the tRNAs in the A and P-sites. The chain is Small ribosomal subunit protein uS13 from Bacillus subtilis (strain 168).